Reading from the N-terminus, the 1003-residue chain is Glycine--tRNA ligase (1003 aa).

Residues M1–C310 form a glycine--tRNA ligase alpha subunit region. The segment at Q311 to L1003 is glycine--tRNA ligase beta subunit.

This sequence belongs to the class-II aminoacyl-tRNA synthetase family.

The protein localises to the cytoplasm. It catalyses the reaction tRNA(Gly) + glycine + ATP = glycyl-tRNA(Gly) + AMP + diphosphate. This is Glycine--tRNA ligase (glyQS) from Chlamydia trachomatis serovar D (strain ATCC VR-885 / DSM 19411 / UW-3/Cx).